We begin with the raw amino-acid sequence, 323 residues long: MNQLDNLKKFSKISADTGDVDLIRTYQIQHATTNPSLILKSPLFTTYLKLFNDAIDYAQKIGGNQNTKITNASDRLIVNIGSEILANISGYISTEIDAQLSFNTDLTIKKAHKLITMYQKKNIDTSRVLIKIAATWEGIQAAEELEKSGIKCNLTLVFSFAQARACAERNIYLISPFIGRIYDWYNQRNLIKTSYINDDPGIQSIKKIYHYYKTYGYNTIIMGASFRRLEQILALSGCDYLTISPHFLKQLYQNTNSVTRQLFPPKTIISHHIPVLDQSEFFQEHNKNQMAVEKLNEGIQQFSIDQQKLHKLLLNNLNVQLQK.

Lys-131 acts as the Schiff-base intermediate with substrate in catalysis.

This sequence belongs to the transaldolase family. Type 1 subfamily. Homodimer.

The protein localises to the cytoplasm. It carries out the reaction D-sedoheptulose 7-phosphate + D-glyceraldehyde 3-phosphate = D-erythrose 4-phosphate + beta-D-fructose 6-phosphate. It participates in carbohydrate degradation; pentose phosphate pathway; D-glyceraldehyde 3-phosphate and beta-D-fructose 6-phosphate from D-ribose 5-phosphate and D-xylulose 5-phosphate (non-oxidative stage): step 2/3. Functionally, transaldolase is important for the balance of metabolites in the pentose-phosphate pathway. The chain is Transaldolase from Blochmanniella floridana.